Here is a 732-residue protein sequence, read N- to C-terminus: Polyribonucleotide nucleotidyltransferase (732 aa).

2 residues coordinate Mg(2+): Asp-502 and Asp-508. Positions 569–628 constitute a KH domain; the sequence is PRLTSIQIPVDAIGMVIGKGGETIRSITEETGAEINIDDDGTVTIACSSPEGTKAAVETI. Residues 638-712 form the S1 motif domain; sequence GTIYMGKVRD…GKTKFALSIK (75 aa).

Belongs to the polyribonucleotide nucleotidyltransferase family. Mg(2+) is required as a cofactor.

The protein localises to the cytoplasm. The enzyme catalyses RNA(n+1) + phosphate = RNA(n) + a ribonucleoside 5'-diphosphate. Its function is as follows. Involved in mRNA degradation. Catalyzes the phosphorolysis of single-stranded polyribonucleotides processively in the 3'- to 5'-direction. This chain is Polyribonucleotide nucleotidyltransferase, found in Chlorobaculum parvum (strain DSM 263 / NCIMB 8327) (Chlorobium vibrioforme subsp. thiosulfatophilum).